The following is an 871-amino-acid chain: Serrate RNA effector molecule homolog (871 aa).

Residues 1-90 form a disordered region; the sequence is MGDSDDEYDR…RRDWDGHSSD (90 aa). Position 2 is an N-acetylglycine (glycine 2). Serine 4 carries the post-translational modification Phosphoserine. Residue tyrosine 8 is modified to Phosphotyrosine. The segment covering 8-73 has biased composition (basic and acidic residues); the sequence is YDRRRRDKFR…ERFSPPRHEL (66 aa). A phosphoserine mark is found at serine 67, serine 74, and serine 136. Lysine 150 participates in a covalent cross-link: Glycyl lysine isopeptide (Lys-Gly) (interchain with G-Cter in SUMO2). The tract at residues 272–411 is disordered; that stretch reads EEEEQAGKPG…KPKDAAGLEC (140 aa). Positions 297-347 are enriched in basic and acidic residues; that stretch reads DGERKTNDKDEKKEDSKQAENDSSNDDKTKKSEGDGDKEEKKEDSEKEAKK. Residues 370-385 are compositionally biased toward acidic residues; the sequence is SESESESGQAEEEKEE. A compositionally biased stretch (basic and acidic residues) spans 386–411; it reads AEALKEKEKPKEEEWEKPKDAAGLEC. Serine 492 and serine 539 each carry phosphoserine. The residue at position 543 (threonine 543) is a Phosphothreonine. Serine 569 carries the post-translational modification Phosphoserine. The tract at residues 574-597 is disordered; sequence ELLGSSGGAPPEEPPKEGNPAEIN. Threonine 670 is modified (phosphothreonine). A Phosphoserine modification is found at serine 678. 3 positions are modified to omega-N-methylarginine: arginine 828, arginine 835, and arginine 845. Residues 830–849 form a disordered region; sequence NYDAFRGQGGYPGKPRNRMV.

Belongs to the ARS2 family. In terms of assembly, interacts with CASP8AP2, ERBB4, NCBP1/CBP80 and DROSHA. Interacts with LUZP4. Interacts with NCBP2/CBP20 and NCBP3. Interacts with MTREX.

It is found in the nucleus. The protein resides in the nucleoplasm. The protein localises to the cytoplasm. Its function is as follows. Acts as a mediator between the cap-binding complex (CBC) and the primary microRNAs (miRNAs) processing machinery during cell proliferation. Contributes to the stability and delivery of capped primary miRNA transcripts to the primary miRNA processing complex containing DGCR8 and DROSHA, thereby playing a role in RNA-mediated gene silencing (RNAi) by miRNAs. Binds capped RNAs (m7GpppG-capped RNA); however interaction is probably mediated via its interaction with NCBP1/CBP80 component of the CBC complex. Involved in cell cycle progression at S phase. Does not directly confer arsenite resistance but rather modulates arsenic sensitivity. Independently of its activity on miRNAs, necessary and sufficient to promote neural stem cell self-renewal. Does so by directly binding SOX2 promoter and positively regulating its transcription. In Pongo abelii (Sumatran orangutan), this protein is Serrate RNA effector molecule homolog (SRRT).